Here is a 437-residue protein sequence, read N- to C-terminus: 3-ketoacyl-CoA thiolase (437 aa).

Cysteine 99 acts as the Acyl-thioester intermediate in catalysis. Catalysis depends on proton acceptor residues histidine 392 and cysteine 422.

This sequence belongs to the thiolase-like superfamily. Thiolase family. Heterotetramer of two alpha chains (FadJ) and two beta chains (FadI).

It is found in the cytoplasm. The catalysed reaction is an acyl-CoA + acetyl-CoA = a 3-oxoacyl-CoA + CoA. The protein operates within lipid metabolism; fatty acid beta-oxidation. Its function is as follows. Catalyzes the final step of fatty acid oxidation in which acetyl-CoA is released and the CoA ester of a fatty acid two carbons shorter is formed. The chain is 3-ketoacyl-CoA thiolase from Pectobacterium atrosepticum (strain SCRI 1043 / ATCC BAA-672) (Erwinia carotovora subsp. atroseptica).